The chain runs to 1424 residues: ABC multidrug transporter H (1424 aa).

The segment at 1–49 (MEDQGHLPSEPRALFDRRDDTDSTNTALDETDLSRTPLQDTSHTPHAED) is disordered. Polar residues predominate over residues 23–42 (STNTALDETDLSRTPLQDTS). Asparagine 79 and asparagine 275 each carry an N-linked (GlcNAc...) asparagine glycan. Residues 96–351 (LSQFNIPQHI…MEEQGFVCRE (256 aa)) form the ABC transporter 1 domain. 7 helical membrane passes run 488–508 (GLFI…LLAM), 520–540 (VLIK…IAQI), 544–564 (IPVL…MVGL), 569–589 (GAFF…TALF), 605–625 (VSGF…PYHA), 629–649 (WFIW…LLSI), and 710–730 (NFGI…IATS). Residues 760-782 (EEAQLNEKAGHKGTGTDSEAQSN) are disordered. 2 N-linked (GlcNAc...) asparagine glycosylation sites follow: asparagine 790 and asparagine 798. The 244-residue stretch at 794 to 1037 (FTWKNLTYTV…VKDYFARYGA (244 aa)) folds into the ABC transporter 2 domain. Position 830–837 (830–837 (GSSGAGKT)) interacts with ATP. Helical transmembrane passes span 1131 to 1151 (IALH…IGDS), 1161 to 1181 (TIFN…PLFI), 1200 to 1220 (VAFV…CAVL), and 1240 to 1260 (AIFF…QFIA). A glycan (N-linked (GlcNAc...) asparagine) is linked at asparagine 1265. 2 helical membrane passes run 1268-1288 (FAAL…GVLV) and 1300-1320 (WIYW…FSVF). Asparagine 1338 is a glycosylation site (N-linked (GlcNAc...) asparagine). Residues 1395-1415 (TAIVCIFVLSSYALVYALMKL) form a helical membrane-spanning segment.

Belongs to the ABC transporter superfamily. ABCG family. PDR (TC 3.A.1.205) subfamily.

The protein localises to the cell membrane. Its activity is regulated as follows. The efflux inhibitor FK506 impairs the transport activity. Its function is as follows. ABC efflux transporter that is able to transport rhodamine 6G (R-6G), a known substrate for many ABC transporters, but seems not to transport azoles. This is ABC multidrug transporter H from Aspergillus fumigatus (strain ATCC MYA-4609 / CBS 101355 / FGSC A1100 / Af293) (Neosartorya fumigata).